The sequence spans 276 residues: Formamidopyrimidine-DNA glycosylase (276 aa).

Pro-2 serves as the catalytic Schiff-base intermediate with DNA. Glu-3 functions as the Proton donor in the catalytic mechanism. The active-site Proton donor; for beta-elimination activity is Lys-60. DNA-binding residues include His-93 and Arg-112. An FPG-type zinc finger spans residues 240-274 (HVYGRKQQPCHHCDTAIEKTVVGGRGTHYCPNCQP). Arg-264 serves as the catalytic Proton donor; for delta-elimination activity.

The protein belongs to the FPG family. Monomer. Zn(2+) serves as cofactor.

It catalyses the reaction Hydrolysis of DNA containing ring-opened 7-methylguanine residues, releasing 2,6-diamino-4-hydroxy-5-(N-methyl)formamidopyrimidine.. It carries out the reaction 2'-deoxyribonucleotide-(2'-deoxyribose 5'-phosphate)-2'-deoxyribonucleotide-DNA = a 3'-end 2'-deoxyribonucleotide-(2,3-dehydro-2,3-deoxyribose 5'-phosphate)-DNA + a 5'-end 5'-phospho-2'-deoxyribonucleoside-DNA + H(+). Functionally, involved in base excision repair of DNA damaged by oxidation or by mutagenic agents. Acts as a DNA glycosylase that recognizes and removes damaged bases. Has a preference for oxidized purines, such as 7,8-dihydro-8-oxoguanine (8-oxoG). Has AP (apurinic/apyrimidinic) lyase activity and introduces nicks in the DNA strand. Cleaves the DNA backbone by beta-delta elimination to generate a single-strand break at the site of the removed base with both 3'- and 5'-phosphates. This chain is Formamidopyrimidine-DNA glycosylase, found in Shouchella clausii (strain KSM-K16) (Alkalihalobacillus clausii).